The following is a 259-amino-acid chain: Type III pantothenate kinase (259 aa).

Residue 6-13 coordinates ATP; that stretch reads DCGNTNTV. 107–110 contacts substrate; that stretch reads GPDR. D109 acts as the Proton acceptor in catalysis. D129 serves as a coordination point for K(+). T132 lines the ATP pocket. Residue T184 coordinates substrate.

This sequence belongs to the type III pantothenate kinase family. Homodimer. NH4(+) is required as a cofactor. K(+) serves as cofactor.

It localises to the cytoplasm. It catalyses the reaction (R)-pantothenate + ATP = (R)-4'-phosphopantothenate + ADP + H(+). It functions in the pathway cofactor biosynthesis; coenzyme A biosynthesis; CoA from (R)-pantothenate: step 1/5. In terms of biological role, catalyzes the phosphorylation of pantothenate (Pan), the first step in CoA biosynthesis. This chain is Type III pantothenate kinase, found in Jannaschia sp. (strain CCS1).